The primary structure comprises 461 residues: tRNA-2-methylthio-N(6)-dimethylallyladenosine synthase (461 aa).

The 117-residue stretch at lysine 18–lysine 134 folds into the MTTase N-terminal domain. [4Fe-4S] cluster-binding residues include cysteine 27, cysteine 63, cysteine 97, cysteine 172, cysteine 176, and cysteine 179. The Radical SAM core domain occupies cysteine 158 to glutamate 388. Residues lysine 391–cysteine 454 enclose the TRAM domain.

The protein belongs to the methylthiotransferase family. MiaB subfamily. As to quaternary structure, monomer. [4Fe-4S] cluster is required as a cofactor.

The protein resides in the cytoplasm. It carries out the reaction N(6)-dimethylallyladenosine(37) in tRNA + (sulfur carrier)-SH + AH2 + 2 S-adenosyl-L-methionine = 2-methylsulfanyl-N(6)-dimethylallyladenosine(37) in tRNA + (sulfur carrier)-H + 5'-deoxyadenosine + L-methionine + A + S-adenosyl-L-homocysteine + 2 H(+). Catalyzes the methylthiolation of N6-(dimethylallyl)adenosine (i(6)A), leading to the formation of 2-methylthio-N6-(dimethylallyl)adenosine (ms(2)i(6)A) at position 37 in tRNAs that read codons beginning with uridine. This Syntrophus aciditrophicus (strain SB) protein is tRNA-2-methylthio-N(6)-dimethylallyladenosine synthase.